The following is a 404-amino-acid chain: Argininosuccinate synthase (404 aa).

ATP-binding positions include 10-18 and alanine 38; that span reads AYSGGVDTS. Tyrosine 89 provides a ligand contact to L-citrulline. Residue glycine 119 participates in ATP binding. 3 residues coordinate L-aspartate: threonine 121, asparagine 125, and aspartate 126. Asparagine 125 provides a ligand contact to L-citrulline. The L-citrulline site is built by arginine 129, serine 177, serine 186, glutamate 262, and tyrosine 274.

It belongs to the argininosuccinate synthase family. Type 1 subfamily. Homotetramer.

It is found in the cytoplasm. It carries out the reaction L-citrulline + L-aspartate + ATP = 2-(N(omega)-L-arginino)succinate + AMP + diphosphate + H(+). The protein operates within amino-acid biosynthesis; L-arginine biosynthesis; L-arginine from L-ornithine and carbamoyl phosphate: step 2/3. This is Argininosuccinate synthase from Prochlorococcus marinus (strain MIT 9312).